We begin with the raw amino-acid sequence, 462 residues long: Prenyltransferase phqI (462 aa).

Glu101 is a brevianamide F binding site. Dimethylallyl diphosphate is bound by residues Arg117, Lys204, Tyr206, Lys273, Tyr275, Tyr357, Tyr442, and Tyr446.

It belongs to the tryptophan dimethylallyltransferase family.

It participates in alkaloid biosynthesis. In terms of biological role, prenyltransferase; part of the gene cluster that mediates the biosynthesis of paraherquamide, a fungal indole alkaloid that belongs to a family of natural products containing a characteristic bicyclo[2.2.2]diazaoctane core. The first steps in the biosynthesis of paraherquamide is the production of the beta-methyl-proline precursor from L-isoleucine. They require oxidation of a terminally hydroxylated L-isoleucine to the corresponding aldehyde by enzymes which have still to be identified. Spontaneous cyclization and dehydration would yield the 4-methyl pyrolline-5-carboxylic acid, which is then reduced by the pyrroline-5-carboxylate reductase phqD leading to the beta-methyl-proline precursor. The next step of paraherquamide biosynthesis involves coupling of beta-methyl-proline and L-tryptophan by the bimodular NRPS phqB, to produce a monooxopiperazine intermediate. The reductase (R) domain of phqB utilizes NADPH for hydride transfer to reduce the thioester bond of the T domain-tethered linear dipeptide to a hemithioaminal intermediate, which spontaneously cleaves the C-S bond to release the aldehyde product. This compound undergoes spontaneous cyclization and dehydration to give a dienamine which is reverse prenylated at C-2 by the reverse prenyltransferase phqJ. The other prenyltransferase present in the cluster, phqI may be a redundant gene in the pathway. During biosynthetic assembly, the key step to produce the polycyclic core is catalyzed by the bifunctional reductase and intramolecular [4+2] Diels-Alderase, phqE, resulting in formation of the [2.2.2] diazaoctane intermediate preparaherquamide. Following formation of preparaherquamide, an indole 2,3-epoxidation-initiated pinacol-like rearrangement is catalyzed by the phqK FAD-dependent monooxygenase. The prenyltransferase phqA, the cytochrome P450 monooxygenase phqL, and the FAD-linked oxidoreductase phqH (or the cytochrome P450 monooxygenase phqM), are proposed to be involved in the formation of the pyran ring. The FAD-dependent monooxygenase phqK is likely responsible for generation of the spiro-oxindole, and the N-methylation is likely mediated by the phqN methyltransferase leading to the isolable natural product paraherquamide F. However, the order of these biosynthetic steps has still to be determined. In late-stage paraherquamide biosynthesis, the third P450 monooxygenase, phqO, is probably responsible for the C-14 hydroxylation, transforming paraherquamide F to paraherquamide G, and paraherquamide E to the final product paraherquamide A. The expansion from the 6-membered ring pyran (in paraherquamides F and G) to the 7-membered dioxepin ring (in paraherquamides A and E) represents a poorly understood but intriguing process that probably involves the 2-oxoglutarate-dependent dioxygenase phqC. Finally, the remaining members of the paraherquamide cluster, including phqI as well as phqM (or phqH), do not have a clearly prescribed role and appear to be redundant. The sequence is that of Prenyltransferase phqI from Penicillium fellutanum.